The following is a 378-amino-acid chain: Probable 3-hydroxyisobutyryl-CoA hydrolase 2 (378 aa).

Substrate is bound by residues Gly-115, Glu-138, and Asp-146. Residues 376–378 carry the Microbody targeting signal motif; it reads AKL.

This sequence belongs to the enoyl-CoA hydratase/isomerase family.

It localises to the peroxisome. It catalyses the reaction 3-hydroxy-2-methylpropanoyl-CoA + H2O = 3-hydroxy-2-methylpropanoate + CoA + H(+). It functions in the pathway amino-acid degradation; L-valine degradation. In terms of biological role, involved in valine catabolism. The polypeptide is Probable 3-hydroxyisobutyryl-CoA hydrolase 2 (Arabidopsis thaliana (Mouse-ear cress)).